Reading from the N-terminus, the 679-residue chain is DNA ligase (679 aa).

Residues 43–47, 92–93, and E124 contribute to the NAD(+) site; these read DYVYD and SM. The N6-AMP-lysine intermediate role is filled by K126. NAD(+)-binding residues include R147, E181, K297, and K321. Residues C415, C418, C433, and C438 each coordinate Zn(2+). Positions 599–679 constitute a BRCT domain; the sequence is TESAEWAGKR…RFDQAMKEEN (81 aa).

Belongs to the NAD-dependent DNA ligase family. LigA subfamily. The cofactor is Mg(2+). Mn(2+) serves as cofactor.

It catalyses the reaction NAD(+) + (deoxyribonucleotide)n-3'-hydroxyl + 5'-phospho-(deoxyribonucleotide)m = (deoxyribonucleotide)n+m + AMP + beta-nicotinamide D-nucleotide.. Functionally, DNA ligase that catalyzes the formation of phosphodiester linkages between 5'-phosphoryl and 3'-hydroxyl groups in double-stranded DNA using NAD as a coenzyme and as the energy source for the reaction. It is essential for DNA replication and repair of damaged DNA. The sequence is that of DNA ligase from Limosilactobacillus fermentum (strain NBRC 3956 / LMG 18251) (Lactobacillus fermentum).